A 970-amino-acid polypeptide reads, in one-letter code: MSKGFTLEKNLPHQKAGVDAVMNVFVSATPHLTDNVAVRLLANPELKLSEQQYYNNIKNVQAFNGIAHSKDNHNAKSNIIDVSMETGTGKTYTYIKTIFDLNKSFGINKFIIIVPTLSIKAGTVNFLKSDALKEHFRDDYKRELRTYVVESQKNAGKNTKSYMPQAIHDFVEASNFNKKYIHVLVINSGMINSKSLTDTYDTGLLDNQFNTPVDALRAVKPFIIIDEPHRFPTGKKTWENIEKFNAQYIIRYGATFSEGYKNLVYRLTAVDAFNDDLVKGIDAYIEDIVGDGNANLKFVKSDGKEATFELNENNNKKSFKLAKGESLSKTHSAIHDLTLDALNKSTAVLSNGIELKIGSSINPYSYDQTLADNMMRKAVKEHFKLEKELLTQRPRIKPLTLFFIDDIEGYRDGNDISGSLKTKFEEYVLAEANELLKTEQDAFYKNYLEKTVTNISSVHGGYFSKDNSDKDDKIEQEINEILHDKELLLSLDNPRRFIFSKWTLREGWDNPNVFQICKLRSSGSTTSKLQEVGRGLRLPVNEYMCRVKDRNFTLKYYVDFTEKDFVDSLVKEVNESSFKERVPSKFTQELKEQIMAQYPELSSRALMNELFNDEIIDDNDNFKDSDAYSRLKSKYPAAFPIGVKPGKIKKATDGKRRTKMRVGKFSELKELWDLINQKAVIEYKINSESEFLSIFKSFMLEETERFTKSGVHTRIDKIYIHNDMAMSKSIVSDDDDFAKLNTMSYREFLDNLSQTIFVKHGTLHKVFCDIKDTINITEYLNIQTIRKIKSGFSKYLLNNSFNKFSLGYNLISGSIHPTKFTNADGNPLGEVLSSDLGVLQDNAKAPLDTYLFEEVFYDSELERRNITDREIQSVVVFSKIPKNSIKIPVAGGYTYSPDFAYVVKTAEGDYLNFIIETKNVDSKDSLRLEEKRKIEHAQALFNQISQSVKVEFRTQFANDDIYQLIKSALP.

A helicase-like domain region spans residues 75–540 (AKSNIIDVSM…EVGRGLRLPV (466 aa)). The AMP site is built by T91, G122, F126, and D226. The tract at residues 894–918 (TYSPDFAYVVKTAEGDYLNFIIETK) is endonuclease domain.

This sequence belongs to the type III restriction-modification system Res protein family. A heterotetramer with stoichiometry Res(2)Mod(2). A heterotrimer with stoichiometry Res(1)Mod(2). Requires Mg(2+) as cofactor. The cofactor is S-adenosyl-L-methionine.

It catalyses the reaction Endonucleolytic cleavage of DNA to give specific double-stranded fragments with terminal 5'-phosphates.. A type III restriction enzyme that recognizes 2 inversely oriented double-stranded sequences 5'-CAGCAG-3' and cleaves DNA 25-27 base pairs downstream of one site. DNA restriction requires both the Res and Mod subunits. DNA topology affects its action; relaxed and negatively supercoiled DNA are digested but positively supercoiled DNA is not a good substrate. Interacts with DNA approximately one half-turn downstream of the recognition site. After binding to one recognition site undergoes random one-dimensional diffusion along DNA until it collides with a stationary enzyme bound to the second DNA site, which is when DNA cleavage occurs. The polypeptide is Type III restriction-modification enzyme EcoP15I Res subunit (Escherichia coli).